Here is a 303-residue protein sequence, read N- to C-terminus: Coenzyme PQQ synthesis protein B (303 aa).

Belongs to the PqqB family.

It participates in cofactor biosynthesis; pyrroloquinoline quinone biosynthesis. In terms of biological role, may be involved in the transport of PQQ or its precursor to the periplasm. This chain is Coenzyme PQQ synthesis protein B, found in Pseudomonas fluorescens (strain SBW25).